A 526-amino-acid chain; its full sequence is Transcription factor kayak (526 aa).

Disordered regions lie at residues 71–165 and 178–221; these read PPLA…GTGG and RNTN…NKQA. Low complexity-rich tracts occupy residues 78-87 and 133-153; these read NNNNNNNNNG and ISDT…HMMG. Residues 154-165 are compositionally biased toward gly residues; the sequence is NSGGGNGGGTGG. Polar residues predominate over residues 178–187; sequence RNTNTSNSAT. A bZIP domain is found at 208-271; that stretch reads EEKRRIRRER…NQLEYFLQAH (64 aa). The interval 210-229 is basic motif; the sequence is KRRIRRERNKQAAARCRKRR. The segment at 236-264 is leucine-zipper; that stretch reads LTEEVELLEKRGENLKKEMELLNETKNQL. Low complexity predominate over residues 301–322; that stretch reads GSCGSGSSHHNNNSNSNDSSSG. Disordered stretches follow at residues 301-345 and 504-526; these read GSCG…DLKP and TSQN…LVSL. Polar residues predominate over residues 330–340; it reads TLNSTGRSNSP. Ser-339 is modified (phosphoserine).

It belongs to the bZIP family. Fos subfamily. In terms of assembly, homodimer. Heterodimer with Jra. The kay-Jra heterodimer binds more stably to the AP-1 site than either of the two proteins alone.

The protein resides in the nucleus. Functionally, developmentally regulated transcription factor AP-1 binds and recognizes the enhancer DNA sequence: 5'-TGA[CG]TCA-3'. May play a role in the function or determination of a particular subset of cells in the developing embryo. It is able to carry out its function either independently of or in conjunction with Jra. The polypeptide is Transcription factor kayak (Drosophila persimilis (Fruit fly)).